The chain runs to 599 residues: NADH-quinone oxidoreductase subunit C/D (599 aa).

Positions 1-189 (MTDLTTHDLA…DPFVLTKQKE (189 aa)) are NADH dehydrogenase I subunit C. Residues 213-599 (DFMFLNLGPN…IDFVMSDVDR (387 aa)) are NADH dehydrogenase I subunit D.

The protein in the N-terminal section; belongs to the complex I 30 kDa subunit family. In the C-terminal section; belongs to the complex I 49 kDa subunit family. In terms of assembly, NDH-1 is composed of 13 different subunits. Subunits NuoB, CD, E, F, and G constitute the peripheral sector of the complex.

It is found in the cell inner membrane. The enzyme catalyses a quinone + NADH + 5 H(+)(in) = a quinol + NAD(+) + 4 H(+)(out). NDH-1 shuttles electrons from NADH, via FMN and iron-sulfur (Fe-S) centers, to quinones in the respiratory chain. The immediate electron acceptor for the enzyme in this species is believed to be ubiquinone. Couples the redox reaction to proton translocation (for every two electrons transferred, four hydrogen ions are translocated across the cytoplasmic membrane), and thus conserves the redox energy in a proton gradient. The sequence is that of NADH-quinone oxidoreductase subunit C/D from Pectobacterium carotovorum subsp. carotovorum (strain PC1).